The chain runs to 526 residues: Probable feruloyl esterase B-1 (526 aa).

The first 19 residues, 1 to 19, serve as a signal peptide directing secretion; it reads MPSLRRLLPFLAAGSAALA. 2 disulfides stabilise this stretch: C28/C75 and C63/C114. N53, N85, N98, and N138 each carry an N-linked (GlcNAc...) asparagine glycan. 3 disulfide bridges follow: C187–C441, C256–C273, and C282–C291. The active-site Acyl-ester intermediate is the S188. N-linked (GlcNAc...) asparagine glycosylation is present at N246. Residues D257, D260, A262, D264, and I266 each contribute to the Ca(2+) site. Residues N287 and N311 are each glycosylated (N-linked (GlcNAc...) asparagine). Catalysis depends on charge relay system residues D400 and H440. Residues N490 and N516 are each glycosylated (N-linked (GlcNAc...) asparagine). Residues C503 and C525 are joined by a disulfide bond.

It belongs to the tannase family.

It localises to the secreted. It carries out the reaction feruloyl-polysaccharide + H2O = ferulate + polysaccharide.. Functionally, involved in degradation of plant cell walls. Hydrolyzes the feruloyl-arabinose ester bond in arabinoxylans as well as the feruloyl-galactose and feruloyl-arabinose ester bonds in pectin. In Aspergillus flavus (strain ATCC 200026 / FGSC A1120 / IAM 13836 / NRRL 3357 / JCM 12722 / SRRC 167), this protein is Probable feruloyl esterase B-1 (faeB-1).